A 399-amino-acid polypeptide reads, in one-letter code: Large envelope protein (399 aa).

At Met1 the chain carries N-acetylmethionine. A lipid anchor (N-myristoyl glycine; by host) is attached at Gly2. Positions Gly2 to Ala118 are pre-S1. Residues Gly2–Asn173 are pre-S. The Virion surface; in external conformation segment spans residues Gly2–Gly180. The Intravirion; in internal conformation portion of the chain corresponds to Gly2–Arg252. A glycan (N-linked (GlcNAc...) asparagine) is linked at Ser4. A disordered region spans residues Lys85 to Pro109. Positions Ser95–Thr105 are enriched in polar residues. The interval Met119–Asn173 is pre-S2. A helical transmembrane segment spans residues Phe181–Ile201. Residues Pro202 to Arg252 are Intravirion; in external conformation-facing. Residues Phe253–Tyr273 form a helical membrane-spanning segment. Residues Gln274–Ser347 are Virion surface-facing. An N-linked (GlcNAc...) asparagine; by host glycan is attached at Asn319. A helical membrane pass occupies residues Leu348–Ile368. The Intravirion segment spans residues Trp369 to Trp374. The helical transmembrane segment at Gly375–Val397 threads the bilayer. The Virion surface portion of the chain corresponds to Tyr398–Ile399.

This sequence belongs to the orthohepadnavirus major surface antigen family. In terms of assembly, in its internal form (Li-HBsAg), interacts with the capsid protein and with the isoform S. Interacts with host chaperone CANX. Associates with host chaperone CANX through its pre-S2 N glycan; this association may be essential for isoform M proper secretion. As to quaternary structure, interacts with isoform L. Interacts with the antigens of satellite virus HDV (HDVAgs); this interaction is required for encapsidation of HDV genomic RNA. Isoform M is N-terminally acetylated by host at a ratio of 90%, and N-glycosylated by host at the pre-S2 region. Post-translationally, myristoylated.

It localises to the virion membrane. Its function is as follows. The large envelope protein exists in two topological conformations, one which is termed 'external' or Le-HBsAg and the other 'internal' or Li-HBsAg. In its external conformation the protein attaches the virus to cell receptors and thereby initiating infection. This interaction determines the species specificity and liver tropism. This attachment induces virion internalization predominantly through caveolin-mediated endocytosis. The large envelope protein also assures fusion between virion membrane and endosomal membrane. In its internal conformation the protein plays a role in virion morphogenesis and mediates the contact with the nucleocapsid like a matrix protein. In terms of biological role, the middle envelope protein plays an important role in the budding of the virion. It is involved in the induction of budding in a nucleocapsid independent way. In this process the majority of envelope proteins bud to form subviral lipoprotein particles of 22 nm of diameter that do not contain a nucleocapsid. This is Large envelope protein from Hepatitis B virus genotype E (isolate Cote d'Ivoire/ABI-129/2003) (HBV-E).